Here is a 268-residue protein sequence, read N- to C-terminus: UDP-2,3-diacylglucosamine hydrolase (268 aa).

Positions 25, 27, 58, 97, and 132 each coordinate Mn(2+). Substrate is bound at residue 97 to 98 (NR). Asp-140, Ser-178, Glu-191, and His-222 together coordinate substrate. 2 residues coordinate Mn(2+): His-222 and His-224.

It belongs to the LpxH family. It depends on Mn(2+) as a cofactor.

The protein localises to the cell inner membrane. It catalyses the reaction UDP-2-N,3-O-bis[(3R)-3-hydroxytetradecanoyl]-alpha-D-glucosamine + H2O = 2-N,3-O-bis[(3R)-3-hydroxytetradecanoyl]-alpha-D-glucosaminyl 1-phosphate + UMP + 2 H(+). It functions in the pathway glycolipid biosynthesis; lipid IV(A) biosynthesis; lipid IV(A) from (3R)-3-hydroxytetradecanoyl-[acyl-carrier-protein] and UDP-N-acetyl-alpha-D-glucosamine: step 4/6. Its function is as follows. Hydrolyzes the pyrophosphate bond of UDP-2,3-diacylglucosamine to yield 2,3-diacylglucosamine 1-phosphate (lipid X) and UMP by catalyzing the attack of water at the alpha-P atom. Involved in the biosynthesis of lipid A, a phosphorylated glycolipid that anchors the lipopolysaccharide to the outer membrane of the cell. The protein is UDP-2,3-diacylglucosamine hydrolase of Ralstonia nicotianae (strain ATCC BAA-1114 / GMI1000) (Ralstonia solanacearum).